The chain runs to 146 residues: Transcriptional regulator MraZ (146 aa).

SpoVT-AbrB domains follow at residues 5-47 (EYYH…TITD) and 76-119 (SVQV…AKER).

The protein belongs to the MraZ family. As to quaternary structure, forms oligomers.

It localises to the cytoplasm. The protein localises to the nucleoid. This is Transcriptional regulator MraZ from Dictyoglomus turgidum (strain DSM 6724 / Z-1310).